The primary structure comprises 339 residues: DNA-directed RNA polymerase RPB7 homolog (339 aa).

Belongs to the asfivirus D339L family. As to quaternary structure, part of the viral DNA-directed RNA polymerase that consists of 8 polII-like subunits (RPB1, RPB2, RPB3, RPB5, RPB6, RPB7, RPB9, RPB10), a capping enzyme and a termination factor.

Its subcellular location is the host cytoplasm. The protein localises to the virion. Component of the DNA-directed RNA polymerase (RNAP) that catalyzes the transcription in the cytoplasm of viral DNA into RNA using the four ribonucleoside triphosphates as substrates. This Ornithodoros (relapsing fever ticks) protein is DNA-directed RNA polymerase RPB7 homolog.